The chain runs to 541 residues: Apolipoprotein N-acyltransferase (541 aa).

Helical transmembrane passes span Met21–Leu41, Leu54–Leu74, Val89–Val109, Ile116–Cys136, Phe157–Phe177, and Tyr189–Leu209. A CN hydrolase domain is found at Leu219–Met500. Catalysis depends on Glu265, which acts as the Proton acceptor. Residue Lys350 is part of the active site. Cys405 serves as the catalytic Nucleophile. The helical transmembrane segment at Leu506–Ile526 threads the bilayer.

This sequence belongs to the CN hydrolase family. Apolipoprotein N-acyltransferase subfamily.

It localises to the cell inner membrane. The catalysed reaction is N-terminal S-1,2-diacyl-sn-glyceryl-L-cysteinyl-[lipoprotein] + a glycerophospholipid = N-acyl-S-1,2-diacyl-sn-glyceryl-L-cysteinyl-[lipoprotein] + a 2-acyl-sn-glycero-3-phospholipid + H(+). It participates in protein modification; lipoprotein biosynthesis (N-acyl transfer). Its function is as follows. Catalyzes the phospholipid dependent N-acylation of the N-terminal cysteine of apolipoprotein, the last step in lipoprotein maturation. The chain is Apolipoprotein N-acyltransferase from Chlamydia caviae (strain ATCC VR-813 / DSM 19441 / 03DC25 / GPIC) (Chlamydophila caviae).